The chain runs to 126 residues: Adrenocorticotropic hormone receptor (126 aa).

A helical membrane pass occupies residues 1-25 (VLPEEIFFTISIVGVLENLIVLLAV). The Cytoplasmic portion of the chain corresponds to 26 to 34 (FKNKNLQAP). Residues 35–55 (MYFFICSLAISDMLGSLYKIL) traverse the membrane as a helical segment. Residues 56 to 80 (ENILIILRNMGYLKPRGSFETTADD) are Extracellular-facing. A helical membrane pass occupies residues 81–102 (IIDSLFVLSLLGAIFSLSVIAA). Residues 103-123 (DRYITIFHALRYHSIVTMRRT) are Cytoplasmic-facing. Residues 124–126 (VVV) form a helical membrane-spanning segment.

This sequence belongs to the G-protein coupled receptor 1 family. In terms of assembly, interacts with MRAP; increasing ligand-sensitivity and generation of cAMP. Interacts with MRAP2; competing with MRAP for binding to MC2R and impairing the binding of corticotropin (ACTH).

The protein localises to the cell membrane. Its function is as follows. Receptor for corticotropin (ACTH). This receptor is mediated by G proteins (G(s)) which activate adenylate cyclase (cAMP). The chain is Adrenocorticotropic hormone receptor (MC2R) from Papio hamadryas (Hamadryas baboon).